Reading from the N-terminus, the 348-residue chain is Phosphoribosylformylglycinamidine cyclo-ligase (348 aa).

This sequence belongs to the AIR synthase family.

The protein localises to the cytoplasm. The enzyme catalyses 2-formamido-N(1)-(5-O-phospho-beta-D-ribosyl)acetamidine + ATP = 5-amino-1-(5-phospho-beta-D-ribosyl)imidazole + ADP + phosphate + H(+). It participates in purine metabolism; IMP biosynthesis via de novo pathway; 5-amino-1-(5-phospho-D-ribosyl)imidazole from N(2)-formyl-N(1)-(5-phospho-D-ribosyl)glycinamide: step 2/2. The chain is Phosphoribosylformylglycinamidine cyclo-ligase from Geobacter sp. (strain M21).